The chain runs to 133 residues: Ribosomal silencing factor RsfS (133 aa).

It belongs to the Iojap/RsfS family. In terms of assembly, interacts with ribosomal protein uL14 (rplN).

The protein localises to the cytoplasm. Functionally, functions as a ribosomal silencing factor. Interacts with ribosomal protein uL14 (rplN), blocking formation of intersubunit bridge B8. Prevents association of the 30S and 50S ribosomal subunits and the formation of functional ribosomes, thus repressing translation. This Zymomonas mobilis subsp. mobilis (strain ATCC 31821 / ZM4 / CP4) protein is Ribosomal silencing factor RsfS.